The sequence spans 1827 residues: Phenolphthiocerol/phthiocerol polyketide synthase subunit C (1827 aa).

Residues 35 to 461 (CEPVAVVGIG…GTNAHVVVEQ (427 aa)) form the Ketosynthase family 3 (KS3) domain. Catalysis depends on for beta-ketoacyl synthase activity residues C207, H342, and H383. The tract at residues 566–876 (VFVYSGQGSQ…LAAVGVAASE (311 aa)) is acyltransferase. S654 (for malonyltransferase activity) is an active-site residue. The N-terminal hotdog fold stretch occupies residues 910–1037 (HPLLGAHIEM…AKVEQSPREC (128 aa)). Residues 910–1076 (HPLLGAHIEM…QHHGPAFAAL (167 aa)) form a dehydratase region. In terms of domain architecture, PKS/mFAS DH spans 910-1198 (HPLLGAHIEM…LRRVERRAVP (289 aa)). H942 serves as the catalytic Proton acceptor; for dehydratase activity. A C-terminal hotdog fold region spans residues 1050 to 1198 (GTTVSPADFY…LRRVERRAVP (149 aa)). D1111 serves as the catalytic Proton donor; for dehydratase activity. The interval 1439-1617 (ASYVVTGGLG…VINWGPWSEV (179 aa)) is beta-ketoacyl reductase. 1440–1485 (SYVVTGGLGGLGLVVARWLVDRGAGRVVLGGRSDPTDEQCNVLAEL) contributes to the NADP(+) binding site. Residues 1706–1785 (RAVTERMCAR…DLTADLMRQL (80 aa)) enclose the Carrier domain. S1745 is modified (O-(pantetheine 4'-phosphoryl)serine).

NADP(+) serves as cofactor. Requires pantetheine 4'-phosphate as cofactor.

It catalyses the reaction icosanoyl-[(phenol)carboxyphthiodiolenone synthase] + 2 (S)-methylmalonyl-CoA + 3 malonyl-CoA + 5 NADPH + 10 H(+) = C32-carboxyphthiodiolenone-[(phenol)carboxyphthiodiolenone synthase] + 5 CO2 + 5 NADP(+) + 5 CoA + 2 H2O. The enzyme catalyses docosanoyl-[(phenol)carboxyphthiodiolenone synthase] + 2 (S)-methylmalonyl-CoA + 3 malonyl-CoA + 5 NADPH + 10 H(+) = C34-carboxyphthiodiolenone-[(phenol)carboxyphthiodiolenone synthase] + 5 CO2 + 5 NADP(+) + 5 CoA + 2 H2O. The catalysed reaction is 17-(4-hydroxyphenyl)heptadecanoyl-[(phenol)carboxyphthiodiolenone synthase] + 2 (S)-methylmalonyl-CoA + 3 malonyl-CoA + 5 NADPH + 10 H(+) = C35-(phenol)carboxyphthiodiolenone-[(phenol)carboxyphthiodiolenone synthase] + 5 CO2 + 5 NADP(+) + 5 CoA + 2 H2O. It carries out the reaction 19-(4-hydroxyphenyl)nonadecanoyl-[(phenol)carboxyphthiodiolenone synthase] + 2 (S)-methylmalonyl-CoA + 3 malonyl-CoA + 5 NADPH + 10 H(+) = C37-(phenol)carboxyphthiodiolenone-[(phenol)carboxyphthiodiolenone synthase] + 5 CO2 + 5 NADP(+) + 5 CoA + 2 H2O. The protein operates within lipid metabolism; fatty acid biosynthesis. Functionally, part of the PpsABCDE complex involved in the biosynthesis of the lipid core common to phthiocerols and phenolphthiocerols by successive additions of malonyl-CoA or methylmalonyl-CoA extender units. PpsA can accept as substrate the activated forms of either icosanoyl (C20), docosanoyl (C22) or lignoceroyl (C24) groups from FadD26, or a (4-hydroxyphenyl)-C17 or (4-hydroxyphenyl)-C19 fatty acyl from FadD29. PpsA initiates the biosynthesis and extends its substrate using a malonyl-CoA extender unit. The PpsB and PpsC proteins add the second and third malonyl-CoA extender units. PpsD adds an (R)-methylmalonyl unit and PpsE adds a second (R)-methylmalonyl unit. The incorporation of the methylmalonyl units results in formation of two branched methyl groups in the elongated product. The sequence is that of Phenolphthiocerol/phthiocerol polyketide synthase subunit C (ppsD) from Mycobacterium bovis (strain ATCC BAA-935 / AF2122/97).